We begin with the raw amino-acid sequence, 238 residues long: Cysteine-rich venom protein kaouthin-2 (238 aa).

Residues 1–19 (MIAFIVLLSLAAVLQQSSG) form the signal peptide. Positions 20-25 (TVDFAS) are excised as a propeptide. The SCP domain maps to 38–164 (VDKHNALRRS…SSKYLYVCQY (127 aa)). 8 disulfides stabilise this stretch: cysteine 75–cysteine 153, cysteine 92–cysteine 165, cysteine 148–cysteine 162, cysteine 184–cysteine 191, cysteine 187–cysteine 196, cysteine 200–cysteine 233, cysteine 209–cysteine 227, and cysteine 218–cysteine 231. Residues 200–233 (CKHHNVFSNCQSLAKQNACQTEWMKSKCAASCFC) enclose the ShKT domain.

Expressed by the venom gland.

It localises to the secreted. In Naja kaouthia (Monocled cobra), this protein is Cysteine-rich venom protein kaouthin-2.